Reading from the N-terminus, the 176-residue chain is Acireductone dioxygenase (176 aa).

Positions 1–21 (MKAYWYDNKPGDQREPHDSGR) are disordered. The segment covering 9 to 20 (KPGDQREPHDSG) has biased composition (basic and acidic residues). Positions 81, 83, 87, and 126 each coordinate Fe(2+). Ni(2+) is bound by residues histidine 81, histidine 83, glutamate 87, and histidine 126.

It belongs to the acireductone dioxygenase (ARD) family. The cofactor is Fe(2+). Ni(2+) is required as a cofactor.

The protein resides in the cytoplasm. It is found in the nucleus. It carries out the reaction 1,2-dihydroxy-5-(methylsulfanyl)pent-1-en-3-one + O2 = 4-methylsulfanyl-2-oxobutanoate + formate + 2 H(+). The enzyme catalyses 1,2-dihydroxy-5-(methylsulfanyl)pent-1-en-3-one + O2 = 3-(methylsulfanyl)propanoate + CO + formate + 2 H(+). It participates in amino-acid biosynthesis; L-methionine biosynthesis via salvage pathway; L-methionine from S-methyl-5-thio-alpha-D-ribose 1-phosphate: step 5/6. In terms of biological role, catalyzes 2 different reactions between oxygen and the acireductone 1,2-dihydroxy-3-keto-5-methylthiopentene (DHK-MTPene) depending upon the metal bound in the active site. Fe-containing acireductone dioxygenase (Fe-ARD) produces formate and 2-keto-4-methylthiobutyrate (KMTB), the alpha-ketoacid precursor of methionine in the methionine recycle pathway. Ni-containing acireductone dioxygenase (Ni-ARD) produces methylthiopropionate, carbon monoxide and formate, and does not lie on the methionine recycle pathway. This Aspergillus fumigatus (strain ATCC MYA-4609 / CBS 101355 / FGSC A1100 / Af293) (Neosartorya fumigata) protein is Acireductone dioxygenase (adi1).